Reading from the N-terminus, the 728-residue chain is Ankyrin repeat protein A (728 aa).

ANK repeat units lie at residues 381-410 (INLP…ETGY), 429-458 (NGFS…KLAA), 477-506 (TSSH…LLIR), 525-554 (YGCP…SLAQ), and 573-602 (ARDT…TLFN).

Belongs to the Toxin_15 family.

The polypeptide is Ankyrin repeat protein A (arpA) (Escherichia coli (strain K12)).